The primary structure comprises 424 residues: UDP-glycosyltransferase 76H1 (424 aa).

Residues Ser-248, 306–307, 324–332, and 346–349 contribute to the UDP-alpha-D-glucose site; these read WA, HCGWNSTIE, and FADQ.

This sequence belongs to the UDP-glycosyltransferase family.

Its function is as follows. May glycosylate diterpenes or flavonols in leaves. This Stevia rebaudiana (Stevia) protein is UDP-glycosyltransferase 76H1.